Consider the following 286-residue polypeptide: 4-hydroxybenzoate octaprenyltransferase (286 aa).

The next 7 helical transmembrane spans lie at 21–40 (GTLL…AGGM), 96–116 (LFVI…GLVV), 142–162 (FLGV…TGEV), 167–187 (WWLF…YAMV), 210–230 (QIIG…GWSA), 235–255 (LYGL…MLIF), and 266–286 (FLNN…DYLF).

Belongs to the UbiA prenyltransferase family. Mg(2+) serves as cofactor.

It is found in the cell inner membrane. It carries out the reaction all-trans-octaprenyl diphosphate + 4-hydroxybenzoate = 4-hydroxy-3-(all-trans-octaprenyl)benzoate + diphosphate. Its pathway is cofactor biosynthesis; ubiquinone biosynthesis. Catalyzes the prenylation of para-hydroxybenzoate (PHB) with an all-trans polyprenyl group. Mediates the second step in the final reaction sequence of ubiquinone-8 (UQ-8) biosynthesis, which is the condensation of the polyisoprenoid side chain with PHB, generating the first membrane-bound Q intermediate 3-octaprenyl-4-hydroxybenzoate. The sequence is that of 4-hydroxybenzoate octaprenyltransferase from Shewanella sp. (strain ANA-3).